The sequence spans 97 residues: Large ribosomal subunit protein bL27 (97 aa).

A propeptide spanning residues 1–9 (MFTFDLQLF) is cleaved from the precursor.

The protein belongs to the bacterial ribosomal protein bL27 family. The N-terminus is cleaved by ribosomal processing cysteine protease Prp.

This chain is Large ribosomal subunit protein bL27, found in Syntrophomonas wolfei subsp. wolfei (strain DSM 2245B / Goettingen).